We begin with the raw amino-acid sequence, 284 residues long: L-ribulose-5-phosphate 3-epimerase UlaE (284 aa).

It belongs to the L-ribulose-5-phosphate 3-epimerase family.

It carries out the reaction L-ribulose 5-phosphate = L-xylulose 5-phosphate. It participates in cofactor degradation; L-ascorbate degradation; D-xylulose 5-phosphate from L-ascorbate: step 3/4. Catalyzes the isomerization of L-xylulose-5-phosphate to L-ribulose-5-phosphate. Is involved in the anaerobic L-ascorbate utilization. In Salmonella dublin (strain CT_02021853), this protein is L-ribulose-5-phosphate 3-epimerase UlaE.